A 69-amino-acid chain; its full sequence is MKEGIHPKYEAVEVKCHCGNVIQTRSTKCADMQVEVCSACHPFYTGKQKLLDTAGRIDRFRKKYAKNNK.

Zn(2+) contacts are provided by C16, C18, C37, and C40.

Belongs to the bacterial ribosomal protein bL31 family. Type A subfamily. As to quaternary structure, part of the 50S ribosomal subunit. The cofactor is Zn(2+).

In terms of biological role, binds the 23S rRNA. This Syntrophotalea carbinolica (strain DSM 2380 / NBRC 103641 / GraBd1) (Pelobacter carbinolicus) protein is Large ribosomal subunit protein bL31.